Here is a 448-residue protein sequence, read N- to C-terminus: Exodeoxyribonuclease 7 large subunit (448 aa).

Belongs to the XseA family. In terms of assembly, heterooligomer composed of large and small subunits.

It is found in the cytoplasm. Its subcellular location is the nucleoid. It catalyses the reaction Exonucleolytic cleavage in either 5'- to 3'- or 3'- to 5'-direction to yield nucleoside 5'-phosphates.. Its function is as follows. Bidirectionally degrades single-stranded DNA into large acid-insoluble oligonucleotides, which are then degraded further into small acid-soluble oligonucleotides. This Bacillus subtilis (strain 168) protein is Exodeoxyribonuclease 7 large subunit.